The primary structure comprises 92 residues: DNA-binding protein HU (92 aa).

The protein belongs to the bacterial histone-like protein family. In terms of assembly, homodimer.

Its function is as follows. Histone-like DNA-binding protein which is capable of wrapping DNA to stabilize it, and thus to prevent its denaturation under extreme environmental conditions. In Buchnera aphidicola subsp. Baizongia pistaciae (strain Bp), this protein is DNA-binding protein HU (hup).